Reading from the N-terminus, the 253-residue chain is Triosephosphate isomerase (253 aa).

9–11 (NWK) lines the substrate pocket. Catalysis depends on His-97, which acts as the Electrophile. Glu-169 serves as the catalytic Proton acceptor. Substrate contacts are provided by residues Gly-175, Ser-215, and 236–237 (GG).

This sequence belongs to the triosephosphate isomerase family. Homodimer.

The protein resides in the cytoplasm. It catalyses the reaction D-glyceraldehyde 3-phosphate = dihydroxyacetone phosphate. It functions in the pathway carbohydrate biosynthesis; gluconeogenesis. Its pathway is carbohydrate degradation; glycolysis; D-glyceraldehyde 3-phosphate from glycerone phosphate: step 1/1. Functionally, involved in the gluconeogenesis. Catalyzes stereospecifically the conversion of dihydroxyacetone phosphate (DHAP) to D-glyceraldehyde-3-phosphate (G3P). This Staphylococcus haemolyticus (strain JCSC1435) protein is Triosephosphate isomerase.